The chain runs to 487 residues: 3-octaprenyl-4-hydroxybenzoate carboxy-lyase (487 aa).

Asparagine 172 serves as a coordination point for Mn(2+). Prenylated FMN-binding positions include 175–177, 189–191, and 194–195; these read IYR, RWL, and RG. Glutamate 238 contributes to the Mn(2+) binding site. The active-site Proton donor is the aspartate 287.

Belongs to the UbiD family. Homohexamer. Prenylated FMN serves as cofactor. The cofactor is Mn(2+).

The protein resides in the cell membrane. The catalysed reaction is a 4-hydroxy-3-(all-trans-polyprenyl)benzoate + H(+) = a 2-(all-trans-polyprenyl)phenol + CO2. It participates in cofactor biosynthesis; ubiquinone biosynthesis. Catalyzes the decarboxylation of 3-octaprenyl-4-hydroxy benzoate to 2-octaprenylphenol, an intermediate step in ubiquinone biosynthesis. The polypeptide is 3-octaprenyl-4-hydroxybenzoate carboxy-lyase (Dechloromonas aromatica (strain RCB)).